Consider the following 211-residue polypeptide: Ferric nitrobindin-like protein (211 aa).

A GXWXGXG motif is present at residues 21-27; that stretch reads GRWRGPG. Residues 104 to 130 are disordered; sequence GVVQEGSDTRTEPGGAEPDPAGRRAPS.

It belongs to the nitrobindin family.

The polypeptide is Ferric nitrobindin-like protein (Beutenbergia cavernae (strain ATCC BAA-8 / DSM 12333 / CCUG 43141 / JCM 11478 / NBRC 16432 / NCIMB 13614 / HKI 0122)).